A 359-amino-acid chain; its full sequence is UDP-N-acetylglucosamine--N-acetylmuramyl-(pentapeptide) pyrophosphoryl-undecaprenol N-acetylglucosamine transferase (359 aa).

Residues T15–G17, N127, R166, S191, I245, A264–E269, and Q290 each bind UDP-N-acetyl-alpha-D-glucosamine.

This sequence belongs to the glycosyltransferase 28 family. MurG subfamily.

The protein localises to the cell inner membrane. It carries out the reaction di-trans,octa-cis-undecaprenyl diphospho-N-acetyl-alpha-D-muramoyl-L-alanyl-D-glutamyl-meso-2,6-diaminopimeloyl-D-alanyl-D-alanine + UDP-N-acetyl-alpha-D-glucosamine = di-trans,octa-cis-undecaprenyl diphospho-[N-acetyl-alpha-D-glucosaminyl-(1-&gt;4)]-N-acetyl-alpha-D-muramoyl-L-alanyl-D-glutamyl-meso-2,6-diaminopimeloyl-D-alanyl-D-alanine + UDP + H(+). It functions in the pathway cell wall biogenesis; peptidoglycan biosynthesis. Its function is as follows. Cell wall formation. Catalyzes the transfer of a GlcNAc subunit on undecaprenyl-pyrophosphoryl-MurNAc-pentapeptide (lipid intermediate I) to form undecaprenyl-pyrophosphoryl-MurNAc-(pentapeptide)GlcNAc (lipid intermediate II). The polypeptide is UDP-N-acetylglucosamine--N-acetylmuramyl-(pentapeptide) pyrophosphoryl-undecaprenol N-acetylglucosamine transferase (Pseudomonas putida (strain W619)).